A 709-amino-acid chain; its full sequence is MIKNLVVIESPNKVKTLKQYLPSDEFEIVSTVGHIREMVYKNFGFDENTYTPIWEDWTKNKQKNPKQKHLLSKFEIIKSIKAKASDAQNIFLASDPDREGEAISWHVYDLLDQKDKAKCKRITFNEITKKAVVDALKQPRNIDLNWVESQFARQILDRMIGFRLSRLLNSYLQAKSAGRVQSVALRFLEEREKEIAKFVPRFWWTVDVLLNKENNQKVVCANKSIPLVLREINPELSASLKLDFEAAENVSGIDFLNEASATRFANQLTGEYEVYFIDEPKIYYSSPNPVYTTASLQKDAINKLGWSSKKVTMVAQRLYEGISVNGKQTALISYPRTDSIRISNQFQSECEKYIEKEFGSHYLADKNKLKRHKKDEKIIQDAHEGIHPTYITITPNDLKNGVKRDEFLLYRLIWIRTVASLMADAKTSRTIVRFINQKNKFYTSSKSLLFDGYQRLYEEIKPNTKDELYIDLSKLKIGDKFSFEKISVNEHKTNPPPRYTQASLIEELEKSNIGRPSTYNTMASVNLERGYANLVNRFFYITELGEKVNNELSKHFGNVINKEFTKKMEKSLDEIAENKVNYQEFLKQFWTNFKSDVKLAENSIQKVKKEKELVERDCPKCNQPLVYRYTKRGNEKFVGCSDFPKCKYSEFSNPKPKLTLETLDELCPECNNKLVKRRTKFNAKKTFIGCSNFPNCRFIKKDNAAEFKQ.

In terms of domain architecture, Toprim spans 3 to 127 (KNLVVIESPN…KCKRITFNEI (125 aa)). Residues Glu9 and Asp95 each coordinate Mg(2+). The region spanning 143-598 (DLNWVESQFA…FWTNFKSDVK (456 aa)) is the Topo IA-type catalytic domain. Positions 176 to 181 (SAGRVQ) are interaction with DNA. Catalysis depends on Tyr334, which acts as the O-(5'-phospho-DNA)-tyrosine intermediate. C4-type zinc fingers lie at residues 618 to 646 (CPKC…FPKC) and 667 to 696 (CPEC…FPNC).

This sequence belongs to the type IA topoisomerase family. In terms of assembly, monomer. It depends on Mg(2+) as a cofactor.

The catalysed reaction is ATP-independent breakage of single-stranded DNA, followed by passage and rejoining.. Its function is as follows. Releases the supercoiling and torsional tension of DNA, which is introduced during the DNA replication and transcription, by transiently cleaving and rejoining one strand of the DNA duplex. Introduces a single-strand break via transesterification at a target site in duplex DNA. The scissile phosphodiester is attacked by the catalytic tyrosine of the enzyme, resulting in the formation of a DNA-(5'-phosphotyrosyl)-enzyme intermediate and the expulsion of a 3'-OH DNA strand. The free DNA strand then undergoes passage around the unbroken strand, thus removing DNA supercoils. Finally, in the religation step, the DNA 3'-OH attacks the covalent intermediate to expel the active-site tyrosine and restore the DNA phosphodiester backbone. The sequence is that of DNA topoisomerase 1 from Mycoplasma genitalium (strain ATCC 33530 / DSM 19775 / NCTC 10195 / G37) (Mycoplasmoides genitalium).